A 173-amino-acid polypeptide reads, in one-letter code: NADH-ubiquinone oxidoreductase chain 6 (173 aa).

The next 5 membrane-spanning stretches (helical) occupy residues 1-21, 27-47, 48-68, 87-107, and 139-159; these read MTYF…AVAS, YGVV…LSLG, VSFV…VVFV, VVGY…VGGF, and CGVG…FVVL.

This sequence belongs to the complex I subunit 6 family.

It localises to the mitochondrion membrane. It carries out the reaction a ubiquinone + NADH + 5 H(+)(in) = a ubiquinol + NAD(+) + 4 H(+)(out). Functionally, core subunit of the mitochondrial membrane respiratory chain NADH dehydrogenase (Complex I) that is believed to belong to the minimal assembly required for catalysis. Complex I functions in the transfer of electrons from NADH to the respiratory chain. The immediate electron acceptor for the enzyme is believed to be ubiquinone. The protein is NADH-ubiquinone oxidoreductase chain 6 (MT-ND6) of Aethia pygmaea (Whiskered auklet).